A 415-amino-acid polypeptide reads, in one-letter code: Diaminopimelate decarboxylase (415 aa).

The residue at position 54 (lysine 54) is an N6-(pyridoxal phosphate)lysine. Residues glycine 223 and 264-267 each bind pyridoxal 5'-phosphate; that span reads EPGR. Substrate is bound by residues arginine 267, arginine 303, and tyrosine 307. The Proton donor role is filled by cysteine 338. Glutamate 339 and tyrosine 374 together coordinate substrate. A pyridoxal 5'-phosphate-binding site is contributed by tyrosine 374.

It belongs to the Orn/Lys/Arg decarboxylase class-II family. LysA subfamily. As to quaternary structure, homodimer. Pyridoxal 5'-phosphate is required as a cofactor.

The enzyme catalyses meso-2,6-diaminopimelate + H(+) = L-lysine + CO2. The protein operates within amino-acid biosynthesis; L-lysine biosynthesis via DAP pathway; L-lysine from DL-2,6-diaminopimelate: step 1/1. Its function is as follows. Specifically catalyzes the decarboxylation of meso-diaminopimelate (meso-DAP) to L-lysine. This is Diaminopimelate decarboxylase from Buchnera aphidicola subsp. Acyrthosiphon pisum (strain APS) (Acyrthosiphon pisum symbiotic bacterium).